Consider the following 255-residue polypeptide: Proteasome subunit alpha type-3 (255 aa).

An N-acetylserine modification is found at Ser-2. N6-acetyllysine is present on residues Lys-57, Lys-206, and Lys-230. Phosphoserine occurs at positions 243 and 250.

The protein belongs to the peptidase T1A family. In terms of assembly, the 26S proteasome consists of a 20S proteasome core and two 19S regulatory subunits. The 20S proteasome core is a barrel-shaped complex made of 28 subunits that are arranged in four stacked rings. The two outer rings are each formed by seven alpha subunits, and the two inner rings are formed by seven beta subunits. The proteolytic activity is exerted by three beta-subunits PSMB5, PSMB6 and PSMB7. Interacts with AURKB. Interacts with CDKN1A. Interacts with MDM2 and RB1. Interacts with the C-terminus of TBXA2R isoform 2. Interacts with DNAJB2. As to quaternary structure, (Microbial infection) Interacts with HIV-1 Tat protein. (Microbial infection) Interacts with hepatitis C virus (HCV) F protein. In terms of assembly, (Microbial infection) Interacts with Epstein-Barr virus EBNA3 proteins.

The protein localises to the cytoplasm. It is found in the nucleus. Functionally, component of the 20S core proteasome complex involved in the proteolytic degradation of most intracellular proteins. This complex plays numerous essential roles within the cell by associating with different regulatory particles. Associated with two 19S regulatory particles, forms the 26S proteasome and thus participates in the ATP-dependent degradation of ubiquitinated proteins. The 26S proteasome plays a key role in the maintenance of protein homeostasis by removing misfolded or damaged proteins that could impair cellular functions, and by removing proteins whose functions are no longer required. Associated with the PA200 or PA28, the 20S proteasome mediates ubiquitin-independent protein degradation. This type of proteolysis is required in several pathways including spermatogenesis (20S-PA200 complex) or generation of a subset of MHC class I-presented antigenic peptides (20S-PA28 complex). Binds to the C-terminus of CDKN1A and thereby mediates its degradation. Negatively regulates the membrane trafficking of the cell-surface thromboxane A2 receptor (TBXA2R) isoform 2. The protein is Proteasome subunit alpha type-3 of Homo sapiens (Human).